Here is a 303-residue protein sequence, read N- to C-terminus: Coenzyme PQQ synthesis protein B (303 aa).

Belongs to the PqqB family.

The protein operates within cofactor biosynthesis; pyrroloquinoline quinone biosynthesis. In terms of biological role, may be involved in the transport of PQQ or its precursor to the periplasm. This is Coenzyme PQQ synthesis protein B from Acinetobacter baumannii (strain SDF).